A 619-amino-acid chain; its full sequence is Low-temperature-induced 65 kDa protein (619 aa).

2 disordered regions span residues 1–383 (MESQ…STYT) and 408–429 (LGYTGENGGGQSESPVKDETPR). Positions 9–33 (YGHEQAEEPIRIHHPEEEEHHEKGA) are enriched in basic and acidic residues. Basic residues predominate over residues 36-48 (VLKKVKEKAKKIK). A compositionally biased stretch (acidic residues) spans 62-73 (VEDDDDEYDEQD). A compositionally biased stretch (basic and acidic residues) spans 175-186 (FSDRGESREAHQ). A compositionally biased stretch (polar residues) spans 188-197 (PLNTPVSLLS). Over residues 221 to 231 (VNVETPKRLEE) the composition is skewed to basic and acidic residues. Polar residues predominate over residues 245–254 (GVSNYQSKVT). Basic and acidic residues-rich tracts occupy residues 276 to 309 (KVTDESPDQKSRQGREEDFPTRSHEFDLKKESDI) and 323 to 337 (AGMEEDFPTRGDVKV). 5 tandem repeats follow at residues 404–408 (VASKL), 442–446 (VAEKL), 460–464 (VMTKL), 490–494 (ISEKL), and 507–511 (IAEKL). The interval 404-511 (VASKLGYTGE…ALSEMIAEKL (108 aa)) is 5 X 5 AA repeats of [IV]-[AMS]-[EST]-K-L. The interval 461 to 485 (MTKLPLSGGGSGVKETQQGEEKGVT) is disordered. S536 is modified (phosphoserine). Basic and acidic residues predominate over residues 537-555 (DQIAEGKGHGEAVAEEGKG). Residues 537–619 (DQIAEGKGHG…GGKGVQDSGN (83 aa)) form a disordered region. The segment covering 583–593 (ESPQSLGTTVG) has biased composition (polar residues). Residues 603–613 (SELGGSGGGKG) show a composition bias toward gly residues.

This sequence belongs to the LTI78/LTI65 family.

The chain is Low-temperature-induced 65 kDa protein (LTI65) from Arabidopsis thaliana (Mouse-ear cress).